We begin with the raw amino-acid sequence, 90 residues long: Small ribosomal subunit protein bS20 (90 aa).

Residues 1–11 show a composition bias toward basic and acidic residues; that stretch reads MANIKSSEKDI. Disordered regions lie at residues 1-29 and 69-90; these read MANI…SRLR and SKNA…SAAA.

This sequence belongs to the bacterial ribosomal protein bS20 family.

Binds directly to 16S ribosomal RNA. This chain is Small ribosomal subunit protein bS20, found in Leptospira borgpetersenii serovar Hardjo-bovis (strain L550).